A 678-amino-acid polypeptide reads, in one-letter code: DNA ligase (678 aa).

Residues 35 to 39 (DSVYD), 84 to 85 (SL), and Glu-116 contribute to the NAD(+) site. The active-site N6-AMP-lysine intermediate is the Lys-118. 4 residues coordinate NAD(+): Arg-139, Glu-178, Lys-297, and Lys-321. 4 residues coordinate Zn(2+): Cys-415, Cys-418, Cys-433, and Cys-438. Residues 600–678 (DGNQIFAGKT…EAQLLEMLNE (79 aa)) enclose the BRCT domain.

The protein belongs to the NAD-dependent DNA ligase family. LigA subfamily. Mg(2+) serves as cofactor. The cofactor is Mn(2+).

The enzyme catalyses NAD(+) + (deoxyribonucleotide)n-3'-hydroxyl + 5'-phospho-(deoxyribonucleotide)m = (deoxyribonucleotide)n+m + AMP + beta-nicotinamide D-nucleotide.. DNA ligase that catalyzes the formation of phosphodiester linkages between 5'-phosphoryl and 3'-hydroxyl groups in double-stranded DNA using NAD as a coenzyme and as the energy source for the reaction. It is essential for DNA replication and repair of damaged DNA. This is DNA ligase from Nostoc punctiforme (strain ATCC 29133 / PCC 73102).